The sequence spans 348 residues: Flap endonuclease 1 (348 aa).

Residues 1–98 form an N-domain region; that stretch reads MGLAELRELI…ETLERRRERK (98 aa). Mg(2+)-binding residues include D28, D80, E149, E151, D170, D172, and D234. The interval 113-256 is I-domain; it reads EREKYARQVA…RALQLIRKYG (144 aa). The interaction with PCNA stretch occupies residues 340–348; that stretch reads RQETLDAFF.

Belongs to the XPG/RAD2 endonuclease family. FEN1 subfamily. As to quaternary structure, interacts with PCNA. PCNA stimulates the nuclease activity without altering cleavage specificity. Mg(2+) is required as a cofactor.

Structure-specific nuclease with 5'-flap endonuclease and 5'-3' exonuclease activities involved in DNA replication and repair. During DNA replication, cleaves the 5'-overhanging flap structure that is generated by displacement synthesis when DNA polymerase encounters the 5'-end of a downstream Okazaki fragment. Binds the unpaired 3'-DNA end and kinks the DNA to facilitate 5' cleavage specificity. Cleaves one nucleotide into the double-stranded DNA from the junction in flap DNA, leaving a nick for ligation. Also involved in the base excision repair (BER) pathway. Acts as a genome stabilization factor that prevents flaps from equilibrating into structures that lead to duplications and deletions. Also possesses 5'-3' exonuclease activity on nicked or gapped double-stranded DNA. In Methanopyrus kandleri (strain AV19 / DSM 6324 / JCM 9639 / NBRC 100938), this protein is Flap endonuclease 1.